Reading from the N-terminus, the 918-residue chain is Plasma membrane ATPase 1 (918 aa).

The span at 1-18 (MTDTSSSSSSSSASSVSA) shows a compositional bias: low complexity. The disordered stretch occupies residues 1-84 (MTDTSSSSSS…VPEEYLQTDP (84 aa)). Topologically, residues 1–115 (MTDTSSSSSS…ADEKESLVVK (115 aa)) are cytoplasmic. A compositionally biased stretch (acidic residues) spans 33 to 47 (AASESSDDDDIDALI). Residue serine 61 is modified to Phosphoserine. A helical membrane pass occupies residues 116–136 (FVMFFVGPIQFVMEAAAILAA). Residues 137–140 (GLSD) lie on the Extracellular side of the membrane. The helical transmembrane segment at 141-160 (WVDFGVICGLLMLNAGVGFV) threads the bilayer. Over 161 to 291 (QEFQAGSIVD…GQGHFTEVLN (131 aa)) the chain is Cytoplasmic. Position 175 is a phosphothreonine (threonine 175). Lysine 252 participates in a covalent cross-link: Glycyl lysine isopeptide (Lys-Gly) (interchain with G-Cter in ubiquitin). A helical membrane pass occupies residues 292 to 313 (GIGIILLVLVIATLLLVWTACF). Residues 314–325 (YRTNGIVRILRY) are Extracellular-facing. Residues 326–347 (TLGITIIGVPVGLPAVVTTTMA) traverse the membrane as a helical segment. At 348-719 (VGAAYLAKKQ…IAILDNSLDI (372 aa)) the chain is on the cytoplasmic side. Aspartate 378 serves as the catalytic 4-aspartylphosphate intermediate. Lysine 555 participates in a covalent cross-link: Glycyl lysine isopeptide (Lys-Gly) (interchain with G-Cter in ubiquitin). Mg(2+)-binding residues include aspartate 634 and aspartate 638. A helical membrane pass occupies residues 720–738 (DLIVFIAIFADVATLAIAY). Over 739-754 (DNAPYSPKPVKWNLPR) the chain is Extracellular. The helical transmembrane segment at 755 to 774 (LWGMSIILGIVLAIGSWITL) threads the bilayer. Residues 775 to 824 (TTMFLPKGGIIQNFGAMNGIMFLQISLTENWLIFITRAAGPFWSSIPSWQ) are Cytoplasmic-facing. A helical membrane pass occupies residues 825–845 (LAGAVFAVDIIATMFTLFGWW). The Extracellular segment spans residues 846–857 (SENWTDIVTVVR). Residues 858 to 874 (VWIWSIGIFCVLGGFYY) traverse the membrane as a helical segment. The Cytoplasmic segment spans residues 875–918 (EMSTSEAFDRLMNGKPMKEKKSTRSVEDFMAAMQRVSTQHEKET). Position 911 is a phosphoserine (serine 911). A phosphothreonine mark is found at threonine 912 and threonine 918.

It belongs to the cation transport ATPase (P-type) (TC 3.A.3) family. Type IIIA subfamily. Interacts with its cargot receptor EXP1 for its transport within the cell and maturation. Phosphorylated on multiple Ser and Thr residues.

Its subcellular location is the cell membrane. The enzyme catalyses ATP + H2O + H(+)(in) = ADP + phosphate + 2 H(+)(out). The plasma membrane ATPase of plants and fungi is a hydrogen ion pump. The proton gradient it generates drives the active transport of nutrients by H(+)-symport. The resulting external acidification and/or internal alkinization may mediate growth responses. In Saccharomyces cerevisiae (strain ATCC 204508 / S288c) (Baker's yeast), this protein is Plasma membrane ATPase 1 (PMA1).